The following is a 290-amino-acid chain: 4-hydroxybenzoate octaprenyltransferase (290 aa).

8 helical membrane passes run 23-43 (IGALLLLWPTLWALWVATPGM), 46-66 (LWILAVFVAGVWLMRAAGCVV), 99-119 (LFVVLVLLAFLLVLTLNAMTI), 141-161 (LPQVVLGAAFGWSIPMAFAAV), 163-183 (ESLPLSCWLMFLANILWAVAY), 212-232 (TLIIGILQLGVMALMALIGWL), 233-253 (NGLGGGYYWAVLVAGALFVYQ), and 268-288 (AFMNNNYVGLVLFLGLAMSYW).

This sequence belongs to the UbiA prenyltransferase family. It depends on Mg(2+) as a cofactor.

The protein localises to the cell inner membrane. It carries out the reaction all-trans-octaprenyl diphosphate + 4-hydroxybenzoate = 4-hydroxy-3-(all-trans-octaprenyl)benzoate + diphosphate. The protein operates within cofactor biosynthesis; ubiquinone biosynthesis. Its function is as follows. Catalyzes the prenylation of para-hydroxybenzoate (PHB) with an all-trans polyprenyl group. Mediates the second step in the final reaction sequence of ubiquinone-8 (UQ-8) biosynthesis, which is the condensation of the polyisoprenoid side chain with PHB, generating the first membrane-bound Q intermediate 3-octaprenyl-4-hydroxybenzoate. This is 4-hydroxybenzoate octaprenyltransferase from Salmonella paratyphi C (strain RKS4594).